Reading from the N-terminus, the 345-residue chain is uncharacterized protein (345 aa).

Disordered stretches follow at residues methionine 1–lysine 24 and methionine 296–serine 345. A compositionally biased stretch (acidic residues) spans serine 304 to leucine 323. Over residues aspartate 324–serine 345 the composition is skewed to polar residues.

This is an uncharacterized protein from Schizosaccharomyces pombe (strain 972 / ATCC 24843) (Fission yeast).